The chain runs to 64 residues: MANAANMIKVEQIGSPIRRHHSQRATLVGLKLNKIGRVTELQDTPEVRGMIAKVQHLVRVVDEK.

Belongs to the universal ribosomal protein uL30 family. In terms of assembly, part of the 50S ribosomal subunit.

This Rhodopseudomonas palustris (strain HaA2) protein is Large ribosomal subunit protein uL30.